We begin with the raw amino-acid sequence, 460 residues long: MASPPAHRSSKAADEELPKASSTFHPSLWGSFFLTYQPPTAPQRANMEERAEVLRERVRKVLKGSTTDQLPETVNLILTLQRLGLGYYYENEIDKLLHQIYSNSDYNEKDLNLVSQRFYLLRKNGYDVPSDVFLSFKTEEGGFACAAADTRSLLSLYNAAHLRKHGEEVLDEAISSTRLRLQDLLGRLLPESPFAKEVSSSLRTPLFRRVGILEARNYIPIYEKEATRNEAVLELAKLNFNLQQLDFCEELKHCSAWWNEMIAKSKLTFVRDRIVEEYFWMNGACYDPPYSLSRIILTKITGLITIIDDMFDTHGTTEDCMKFAEAFGRWDESAIHLLPEYMKDFYILMLETFQSFEDALGPEKSYRVLYLKQAMERLVELYSKEIKWRDDDYVPTMSEHLQVSAETIATIALTCSAYAGMGDMSITKETFEWALSFPQFNYKNFWFICTALQRCRIDQA.

Residues aspartate 308 and aspartate 312 each contribute to the Mg(2+) site. Positions 308 and 312 each coordinate substrate. The short motif at 308-312 is the DDXXD motif element; sequence DDMFD.

The protein belongs to the terpene synthase family. As to quaternary structure, monomer. Mg(2+) serves as cofactor. The cofactor is Mn(2+).

Its subcellular location is the cytoplasm. It participates in secondary metabolite biosynthesis; terpenoid biosynthesis. Non-functional sesquiterpene synthase due to a frameshift removing part of the catalytic site. In Zea mays (Maize), this protein is Inactive 7-epi-sesquithujene synthase.